The sequence spans 89 residues: Defensin-like protein 250 (89 aa).

A signal peptide spans Met1–Ala23. 4 disulfide bridges follow: Cys29–Cys86, Cys40–Cys69, Cys48–Cys79, and Cys67–Cys81.

Belongs to the DEFL family.

Its subcellular location is the secreted. This is Defensin-like protein 250 (SCRL8) from Arabidopsis thaliana (Mouse-ear cress).